Reading from the N-terminus, the 232-residue chain is MAASAASSEHFEKLHEIFRGLLEDLQGVPERLLGTAGTEEKKKLVRDFDENQQEANETLAEMEEELRYAPLTFRNPMMSKLRNYRKDLAKLHREVRSTPLTAAPGGRGDLKYGTYTLENEHLNRLQSQRALLLQGTESLNRATQSIERSHRIATETDQIGTEIIEELGEQRDQLERTKSRLVNTNENLSKSRKILRSMSRKVITNKLLLSVIILLELAILVGLVYYKFFRHH.

At A2 the chain carries N-acetylalanine. Interaction with CLINT1 stretches follow at residues 2-23 and 69-73; these read AASA…GLLE and APLTF. At 2 to 208 the chain is on the cytoplasmic side; the sequence is AASAASSEHF…SRKVITNKLL (207 aa). Positions 36–98 form a coiled coil; that stretch reads AGTEEKKKLV…AKLHREVRST (63 aa). R107 is modified (omega-N-methylarginine). S138 is subject to Phosphoserine. Residues 160–201 are a coiled coil; sequence GTEIIEELGEQRDQLERTKSRLVNTNENLSKSRKILRSMSRK. Residues 209-229 traverse the membrane as a helical; Anchor for type IV membrane protein segment; it reads LSVIILLELAILVGLVYYKFF. The Vesicular segment spans residues 230–232; sequence RHH.

This sequence belongs to the VTI1 family. In terms of assembly, forms a SNARE complex with STX7, STX8 and VAMP8 which functions in the homotypic fusion of late endosomes. Component of the SNARE complex composed of STX7, STX8, VAMP7 and VIT1B that is required for heterotypic fusion of late endosomes with lysosomes. May interact with STX17. Interacts with CLINT1. Broadly expressed.

The protein localises to the early endosome membrane. The protein resides in the late endosome membrane. It is found in the lysosome membrane. Its subcellular location is the cytoplasmic granule. It localises to the recycling endosome membrane. V-SNARE that mediates vesicle transport pathways through interactions with t-SNAREs on the target membrane. These interactions are proposed to mediate aspects of the specificity of vesicle trafficking and to promote fusion of the lipid bilayers. The sequence is that of Vesicle transport through interaction with t-SNAREs homolog 1B (Vti1b) from Mus musculus (Mouse).